Here is a 240-residue protein sequence, read N- to C-terminus: Eukaryotic translation initiation factor 3 subunit J (240 aa).

Residues 1-66 are disordered; the sequence is MADDWESAAD…VPVKTKPSKA (66 aa). Positions 27-45 are enriched in acidic residues; that stretch reads GEDDDDDVKESWEDEEEKK.

This sequence belongs to the eIF-3 subunit J family. In terms of assembly, component of the eukaryotic translation initiation factor 3 (eIF-3) complex. The eIF-3 complex interacts with pix.

It localises to the cytoplasm. Component of the eukaryotic translation initiation factor 3 (eIF-3) complex, which is involved in protein synthesis of a specialized repertoire of mRNAs and, together with other initiation factors, stimulates binding of mRNA and methionyl-tRNAi to the 40S ribosome. The eIF-3 complex specifically targets and initiates translation of a subset of mRNAs involved in cell proliferation. This is Eukaryotic translation initiation factor 3 subunit J from Drosophila persimilis (Fruit fly).